We begin with the raw amino-acid sequence, 216 residues long: Talanin (216 aa).

In terms of tissue distribution, isoform 4 is expressed in placenta, lung, kidney and pancreas.

May play a role in uric acid excretion. The protein is Talanin (ZNF365) of Homo sapiens (Human).